We begin with the raw amino-acid sequence, 442 residues long: Protein trichome birefringence-like 26 (442 aa).

The helical; Signal-anchor for type II membrane protein transmembrane segment at 51–71 (FFLYFSLVALAYYFIISSLAV) threads the bilayer. The GDS motif motif lies at 164–166 (GDS). The short motif at 409–423 (DCLHWCLPGPIDSWN) is the DCXHWCLPGXXDXWN motif element.

Belongs to the PC-esterase family. TBL subfamily.

The protein localises to the membrane. Functionally, may be involved in the O-acetylation of mannan. May act as a bridging protein that binds pectin and other cell wall polysaccharides. Probably involved in maintaining esterification of pectins. The protein is Protein trichome birefringence-like 26 (TBL26) of Arabidopsis thaliana (Mouse-ear cress).